Reading from the N-terminus, the 333-residue chain is E3 ubiquitin-protein ligase MIR1 (333 aa).

Residues 1-60 form an RING-CH-type zinc finger; the sequence is MEDEDVPVCWICNEELGNERFRACGCTGELENVHRSCLSTWLTISRNTACQICGVVYNTR. Residues 1-82 lie on the Cytoplasmic side of the membrane; that stretch reads MEDEDVPVCW…PRLTYQEGLE (82 aa). 8 residues coordinate Zn(2+): Cys9, Cys12, Cys24, Cys26, His34, Cys37, Cys50, and Cys53. Residues 83–103 traverse the membrane as a helical segment; that stretch reads LIVFIFIMTLGAAGLAAATWV. The Extracellular segment spans residues 104-121; the sequence is WLYIVGGHDPEIDHVAAA. The helical transmembrane segment at 122 to 142 threads the bilayer; the sequence is AYYVFFVFYQLFVVFGLGAFF. Residues 143 to 333 lie on the Cytoplasmic side of the membrane; the sequence is HMMRHVGRAY…SAVSSALMFH (191 aa). Positions 187 to 257 are disordered; sequence GDNQDEEGPA…GRDDNVEPTA (71 aa). Residues 195–221 show a composition bias toward low complexity; it reads PAGAAPGDQNGPAGAAPGDQDGPADGA. Residues 235–252 show a composition bias toward basic and acidic residues; it reads AGYKEAGEPTHNDGRDDN.

In terms of assembly, binds human MHC-I and CD1D.

It is found in the host cell membrane. The protein localises to the host endoplasmic reticulum. The enzyme catalyses [E2 ubiquitin-conjugating enzyme]-S-ubiquitinyl-L-cysteine + [acceptor protein]-L-cysteine = [E2 ubiquitin-conjugating enzyme]-L-cysteine + [acceptor protein]-S-ubiquitinyl-L-cysteine.. Its pathway is protein modification; protein ubiquitination. Its function is as follows. Membrane-bound E3 ubiquitin ligase expressed during late stages of lytic replication to mediate polyubiquitination of various host membrane proteins related to the immune response. Promotes ubiquitination and subsequent degradation of host MHC-I and CD1D molecules, DC-SIGN and DC-SIGNR, presumably to prevent lysis of infected cells by cytotoxic T-lymphocytes. Binds target molecules through transmembrane interaction. E3 ubiquitin-protein ligases accept ubiquitin from specific E2 ubiquitin-conjugating enzymes, and then transfer it to target protein. The result of this ubiquitination is the enhancement of the endocytosis of the target chain and the delivery to the lysosome, where it is proteolytically destroyed. Induces ubiquitination not only on lysines, but also on cysteine residues. This is E3 ubiquitin-protein ligase MIR1 (K3) from Human herpesvirus 8 type P (isolate GK18) (HHV-8).